Consider the following 1029-residue polypeptide: Multiple C2 domain and transmembrane region protein 6 (1029 aa).

The 111-residue stretch at 1–111 (MNKLVVEIVD…SGVQRYPLDK (111 aa)) folds into the C2 1 domain. The interval 187-224 (TKKKEKESRTFHSIGAHAGGGGGAPPMSQAKQAYPPPP) is disordered. C2 domains lie at 277-398 (RSSG…PQWY), 437-562 (RVSH…PRWF), and 605-727 (FSSD…THFY). Ca(2+)-binding residues include Asp310, Asp316, Asp363, Asp365, and Asp371. The next 2 membrane-spanning stretches (helical) occupy residues 864-884 (LILV…LFVI) and 976-996 (FALI…AIII).

This sequence belongs to the MCTP family. Ca(2+) serves as cofactor. Expressed in the vascular tissues of cotyledons and rosette leaves. Accumulates in roots caps and shoot apical meristems (SAMs). Observed in flowers.

It localises to the cell membrane. Its subcellular location is the cytoplasm. The protein resides in the endosome membrane. Its function is as follows. Regulates flowering time under long days. May function as a signaling molecule by regulating the trafficking of other regulators. The protein is Multiple C2 domain and transmembrane region protein 6 of Arabidopsis thaliana (Mouse-ear cress).